We begin with the raw amino-acid sequence, 210 residues long: Synaptosomal-associated protein 23 (210 aa).

Position 1 is an N-acetylmethionine (Met1). A phosphoserine mark is found at Ser5, Ser20, Ser23, and Ser34. The t-SNARE coiled-coil homology 1 domain maps to 14–76 (HQVTDESLES…REAEKTLTEL (63 aa)). Residues 23–76 (STRRILGLAIESQDAGIKTITMLDEQGEQLNRIEEGMDQINKDMREAEKTLTEL) adopt a coiled-coil conformation. S-palmitoyl cysteine attachment occurs at residues Cys79, Cys80, Cys83, Cys85, and Cys87. The interval 104-136 (GDGGDSSPSNVVSKQPSRITNGQPQQTTGAASG) is disordered. The segment covering 109 to 133 (SSPSNVVSKQPSRITNGQPQQTTGA) has biased composition (polar residues). Phosphoserine is present on residues Ser110 and Ser160. The t-SNARE coiled-coil homology 2 domain maps to 145–207 (DAREDEMEEN…DIANTRAKKL (63 aa)).

This sequence belongs to the SNAP-25 family. In terms of assembly, homotetramer (via coiled-coil domain), also forms heterotetramers with STX4 and VAMP3. Found in a complex with VAMP8 and STX1A. Found in a complex with VAMP8 and STX4 in pancreas. Interacts simultaneously with SNAPIN and SYN4. Interacts with STX1A. Interacts with STX12. Interacts tightly to multiple syntaxins and synaptobrevins/VAMPs. Interacts with ZDHHC13 (via ANK repeats). Interacts with ZDHHC17 (via ANK repeats).

The protein resides in the cell membrane. It localises to the synapse. The protein localises to the synaptosome. It is found in the cytoplasmic vesicle membrane. In terms of biological role, essential component of the high affinity receptor for the general membrane fusion machinery and an important regulator of transport vesicle docking and fusion. This Rattus norvegicus (Rat) protein is Synaptosomal-associated protein 23 (Snap23).